The following is a 305-amino-acid chain: MSKRVTVLMGGASAERDVSLRSGAAAAKALEQAGFEVALVDCDRNPAELVRAITETRPDVVFNALHGRFGEDGCVQGVLNLLGVPYTHSGLLASAAAMDKAFARALFASAGIPVAEGRVITRTDRNGPDPLPRPFVVKPLNEGSSVGVFIVRDNQPSPLPDWPFDADEVLVESFIPGRELTAAVMGDRALGVLEITSDHGFYDYEAKYAPGGSRHLMPAPIPEADYAEACRLAVAAHKALGCRGVSRADLRYDDTVPGQPPRLVMLEVNTQPGMTATSLVPEMAAYQGITFPELVRWMVEEARCD.

In terms of domain architecture, ATP-grasp spans 104-300 (RALFASAGIP…FPELVRWMVE (197 aa)). 131–181 (LPRPFVVKPLNEGSSVGVFIVRDNQPSPLPDWPFDADEVLVESFIPGRELT) contacts ATP. Positions 249, 267, and 269 each coordinate Mg(2+).

This sequence belongs to the D-alanine--D-alanine ligase family. Mg(2+) is required as a cofactor. Mn(2+) serves as cofactor.

The protein localises to the cytoplasm. It catalyses the reaction 2 D-alanine + ATP = D-alanyl-D-alanine + ADP + phosphate + H(+). The protein operates within cell wall biogenesis; peptidoglycan biosynthesis. In terms of biological role, cell wall formation. This Paramagnetospirillum magneticum (strain ATCC 700264 / AMB-1) (Magnetospirillum magneticum) protein is D-alanine--D-alanine ligase.